The primary structure comprises 825 residues: Endoglucanase C (825 aa).

The N-terminal stretch at Met1 to Ala28 is a signal peptide. Glu219 (proton donor) is an active-site residue. The active-site Nucleophile is the Glu335. Residues Asp607–Gly621 are compositionally biased toward basic and acidic residues. The segment at Asp607–Gln635 is disordered.

This sequence belongs to the glycosyl hydrolase 5 (cellulase A) family.

It catalyses the reaction Endohydrolysis of (1-&gt;4)-beta-D-glucosidic linkages in cellulose, lichenin and cereal beta-D-glucans.. This is Endoglucanase C (celC) from Evansella cellulosilytica (strain ATCC 21833 / DSM 2522 / FERM P-1141 / JCM 9156 / N-4) (Bacillus cellulosilyticus).